The following is an 82-amino-acid chain: Small ribosomal subunit protein uS17 (82 aa).

This sequence belongs to the universal ribosomal protein uS17 family. Part of the 30S ribosomal subunit.

Functionally, one of the primary rRNA binding proteins, it binds specifically to the 5'-end of 16S ribosomal RNA. The chain is Small ribosomal subunit protein uS17 from Shewanella piezotolerans (strain WP3 / JCM 13877).